A 2472-amino-acid chain; its full sequence is Spectrin alpha chain, non-erythrocytic 1 (2472 aa).

Methionine 1 carries the N-acetylmethionine modification. Spectrin repeat units lie at residues 45-146 (RFQF…IKLL), 150-251 (KLVQ…QGKL), 256-358 (EVQR…ARLD), 361-465 (YRLQ…QYEQ), 468-570 (DLQL…AQLA), 574-676 (HLQQ…KLRE), 679-781 (QQQQ…QKLA), 785-888 (RLQQ…DLED), and 891-961 (QAQQ…QQVA). Phosphoserine is present on serine 587. Lysine 637 carries the post-translational modification N6-acetyllysine. Lysine 803 carries the post-translational modification N6-acetyllysine. A phosphoserine mark is found at serine 924, serine 982, serine 999, serine 1029, serine 1031, and serine 1041. An SH3 domain is found at 967–1026 (TGKELVLALYDYQEKSPREVTMKKGDILTLLNSTNKDWWKVEVNDRQGFVPAAYVKKLDP). A Spectrin 10 repeat occupies 1096–1166 (LFREANELQQ…LESEGLMAEE (71 aa)). Position 1176 is a phosphotyrosine (tyrosine 1176). Phosphoserine occurs at positions 1190, 1207, 1217, 1291, 1306, 1323, and 1338. The stretch at 1233 to 1336 (HEVQRFHRDA…RADQRKAKLG (104 aa)) is one Spectrin 11 repeat. 2 Spectrin repeats span residues 1339-1441 (HDLQ…RMML) and 1446-1549 (ELQL…KLGE). Position 1519 is an N6-acetyllysine (lysine 1519). 5 positions are modified to phosphoserine: serine 1550, serine 1557, serine 1578, serine 1615, and serine 1647. Spectrin repeat units follow at residues 1552–1656 (TLQQ…KLKE), 1659–1762 (KQQN…KLSE), 1764–1868 (HRLH…RLEE), 1871–1974 (EYQQ…KLDE), 1978–2081 (FLQF…KLLE), 2092–2194 (LFLT…LELQ), and 2206–2310 (LRQE…NLEQ). Threonine 2020 carries the phosphothreonine modification. Lysine 2052 is modified (N6-acetyllysine). Threonine 2066 carries the phosphothreonine modification. EF-hand domains follow at residues 2323–2358 (EALK…LGYD), 2366–2401 (EPDP…RETE), and 2404–2439 (KSSE…EQAD). Ca(2+) is bound by residues aspartate 2336, aspartate 2338, serine 2340, arginine 2342, glutamate 2347, aspartate 2379, asparagine 2381, aspartate 2383, histidine 2385, and glutamate 2390. The residue at position 2421 (lysine 2421) is an N6-acetyllysine.

Belongs to the spectrin family. As to quaternary structure, like erythrocyte spectrin, the spectrin-like proteins are capable of forming dimers which can further associate to tetramers. Interacts (via C-terminal spectrin repeats) with TRPC4. Interacts with CALM and EMD. Interacts with isoform 1 of ACP1. Identified in a complex with ACTN4, CASK, IQGAP1, MAGI2, NPHS1 and SPTBN1. Interacts with SHANK3 (via ANK repeats). Interacts with CLN3; this interaction regulates the fodrin localization at the plasma membrane. Phosphorylation of Tyr-1176 decreases sensitivity to cleavage by calpain in vitro. In terms of tissue distribution, expressed in the foot process layer of podocytes in the kidney glomerulus and in tubules (at protein level).

It is found in the cytoplasm. The protein resides in the cytoskeleton. The protein localises to the cell cortex. Its function is as follows. Fodrin, which seems to be involved in secretion, interacts with calmodulin in a calcium-dependent manner and is thus candidate for the calcium-dependent movement of the cytoskeleton at the membrane. The polypeptide is Spectrin alpha chain, non-erythrocytic 1 (Sptan1) (Rattus norvegicus (Rat)).